The primary structure comprises 330 residues: MKNLKFIKPFFVEEIDENPISGKFTIKPLERGYGITVGNALRRVLLSSLPGAAIVNVKIQGVEQEFTTIPGVYEDVMTIILNLKKIVFAVDDESDDFEEKLELIAKGPQRLTAASFELPAGVKIINPDHYITTLSDDVCFHMTVTIKKGIGYVGAKENKVHIENQVGVIAIDSLFTPVVNVSYQVEKKLGNKDELTIEITTNGALLAKEALATAASILVDHFNVLVELSQKPAHVEFVSESKKEAHNYVLDLEIEQLDLSVRLFNSLKRAGIDTVASLVKLSEKEVVKLKSLGRKSFQELKDKFLEYGLEFNDYLKEALHHSVEEDKDKH.

Positions 1-229 (MKNLKFIKPF…DHFNVLVELS (229 aa)) are alpha N-terminal domain (alpha-NTD). Residues 245 to 330 (AHNYVLDLEI…HSVEEDKDKH (86 aa)) are alpha C-terminal domain (alpha-CTD).

The protein belongs to the RNA polymerase alpha chain family. Homodimer. The RNAP catalytic core consists of 2 alpha, 1 beta, 1 beta' and 1 omega subunit. When a sigma factor is associated with the core the holoenzyme is formed, which can initiate transcription.

The enzyme catalyses RNA(n) + a ribonucleoside 5'-triphosphate = RNA(n+1) + diphosphate. Its function is as follows. DNA-dependent RNA polymerase catalyzes the transcription of DNA into RNA using the four ribonucleoside triphosphates as substrates. The chain is DNA-directed RNA polymerase subunit alpha from Aster yellows witches'-broom phytoplasma (strain AYWB).